The chain runs to 74 residues: ATP synthase subunit 9, mitochondrial (74 aa).

2 helical membrane passes run 16-36 and 50-70; these read GLIGAGVGIGVVFGALILGVA and ILGFAFSEATGLFALMMAFLL.

The protein belongs to the ATPase C chain family. As to quaternary structure, F-type ATPases have 2 components, CF(1) - the catalytic core - and CF(0) - the membrane proton channel. CF(1) has five subunits: alpha(3), beta(3), gamma(1), delta(1), epsilon(1). CF(0) has three main subunits: a, b and c.

The protein resides in the mitochondrion membrane. In terms of biological role, mitochondrial membrane ATP synthase (F(1)F(0) ATP synthase or Complex V) produces ATP from ADP in the presence of a proton gradient across the membrane which is generated by electron transport complexes of the respiratory chain. F-type ATPases consist of two structural domains, F(1) - containing the extramembraneous catalytic core and F(0) - containing the membrane proton channel, linked together by a central stalk and a peripheral stalk. During catalysis, ATP synthesis in the catalytic domain of F(1) is coupled via a rotary mechanism of the central stalk subunits to proton translocation. Part of the complex F(0) domain. A homomeric c-ring of probably 10 subunits is part of the complex rotary element. This is ATP synthase subunit 9, mitochondrial (ATP9) from Trichophyton rubrum (Athlete's foot fungus).